Reading from the N-terminus, the 238-residue chain is Transmembrane protein 127 (238 aa).

M1 is modified (N-acetylmethionine). Residues 1 to 11 are compositionally biased toward gly residues; sequence MYAPGGAGLPG. A disordered region spans residues 1–27; the sequence is MYAPGGAGLPGGRRRRSPGSSALPKQP. S17 is modified (phosphoserine). 3 consecutive transmembrane segments (helical) span residues 96 to 116, 130 to 150, and 169 to 189; these read IAAFCFLGILCSLSAFLLDVF, AFAHILTVLQCATVIGFSYWA, and VYVTFAVSFYLVAGAGGASIL.

It belongs to the TMEM127 family.

Its subcellular location is the cell membrane. It localises to the cytoplasm. In terms of biological role, controls cell proliferation acting as a negative regulator of TOR signaling pathway mediated by mTORC1. May act as a tumor suppressor. The polypeptide is Transmembrane protein 127 (Tmem127) (Mus musculus (Mouse)).